A 163-amino-acid polypeptide reads, in one-letter code: I-Kappa-B like protein N3 (163 aa).

2 ANK repeats span residues 62-95 (LGDT…NLNT) and 100-130 (NGDT…NLQT).

This sequence belongs to the polydnaviridae I-Kappa-B like protein family.

Its function is as follows. Suppresses the host immune response through NF-kappa-B inactivation. Possesses ankyrin repeat domains required for NF-kappa-B binding but lacks the regulatory regions required for dissociation from NF-kappa-B and degradation. Therefore, prevents host NF-kappa-B release and subsequent activation. In Microplitis demolitor (Parasitoid wasp), this protein is I-Kappa-B like protein N3 (N6).